Here is a 419-residue protein sequence, read N- to C-terminus: Protein FAM181B (419 aa).

Residues 107 to 157 (LMGAAPPGPSSPGAADTPAKRPLAGAQTVPVPVPAHGKAAPRREASQAAAA) form a disordered region.

This sequence belongs to the FAM181 family.

The polypeptide is Protein FAM181B (FAM181B) (Bos taurus (Bovine)).